A 76-amino-acid chain; its full sequence is uncharacterized protein (76 aa).

The disordered stretch occupies residues 1–24 (MPLRLCQGRKDRASDPVRDDGSPP). Basic and acidic residues predominate over residues 8–22 (GRKDRASDPVRDDGS).

This is an uncharacterized protein from Dryophytes versicolor (chameleon treefrog).